The chain runs to 250 residues: Acetylglutamate kinase (250 aa).

Residues 41 to 42, Arg-63, and Asn-156 each bind substrate; that span reads GG.

The protein belongs to the acetylglutamate kinase family. ArgB subfamily.

It localises to the cytoplasm. The catalysed reaction is N-acetyl-L-glutamate + ATP = N-acetyl-L-glutamyl 5-phosphate + ADP. The protein operates within amino-acid biosynthesis; L-arginine biosynthesis; N(2)-acetyl-L-ornithine from L-glutamate: step 2/4. In terms of biological role, catalyzes the ATP-dependent phosphorylation of N-acetyl-L-glutamate. This chain is Acetylglutamate kinase, found in Listeria monocytogenes serotype 4b (strain F2365).